The following is a 286-amino-acid chain: Penicillin-insensitive murein endopeptidase (286 aa).

An N-terminal signal peptide occupies residues 1–22; it reads MNKILLKTTIIFTALFSLNVVA. Histidine 117, histidine 120, aspartate 127, aspartate 152, and histidine 218 together coordinate Zn(2+).

The protein belongs to the peptidase M74 family. Requires Zn(2+) as cofactor.

It is found in the periplasm. Murein endopeptidase that cleaves the D-alanyl-meso-2,6-diamino-pimelyl amide bond that connects peptidoglycan strands. Likely plays a role in the removal of murein from the sacculus. The polypeptide is Penicillin-insensitive murein endopeptidase (mepA) (Haemophilus influenzae (strain ATCC 51907 / DSM 11121 / KW20 / Rd)).